Reading from the N-terminus, the 242-residue chain is DNA repair protein RecO (242 aa).

The protein belongs to the RecO family. Monomer.

Involved in DNA repair and RecF pathway recombination. The chain is DNA repair protein RecO from Shigella flexneri.